The chain runs to 573 residues: Cytochrome P450 monooxygenase GME11363 (573 aa).

A helical transmembrane segment spans residues 10–30 (IGVVAAVLLAALILLYRAALP). Heme is bound at residue Cys519.

Belongs to the cytochrome P450 family. Heme serves as cofactor.

The protein resides in the membrane. The protein operates within secondary metabolite biosynthesis. In terms of biological role, cytochrome P450 monooxygenase; part of the gene cluster that mediates the biosynthesis of dibenzodioxocinones such as pestalotiollide B, a novel class of inhibitors against cholesterol ester transfer protein (CEPT). The biosynthesis initiates from condensation of acetate and malonate units catalyzed by the non-reducing PKS pks8/GME11356. Pks8/GME11356 lacks a thioesterase (TE) domain, which is important to the cyclizing of the third ring of atrochrysone carboxylic acid, and the esterase GME11355 might play the role of TE and catalyzes the cyclization reaction of the C ring. The lactamase-like protein GME11357 (or other beta-lactamases in Pestalotiopsis microspora) probably hydrolyzes the thioester bond between the ACP of pks8/GME11356 and the intermediate to release atrochrysone carboxylic acid, which is spontaneously dehydrates to form endocrocin anthrone. Endocrocin anthrone is further converted to emodin via the endocrocin intermediate. Emodin is then oxidized by several enzymes such as the Baeyer-Villiger oxidase GME11358, the oxidoreductase GME11367, the short chain dehydrogenase/reductase GME11373, as well as by other oxidoreductases from the cluster, to modify the A and C rings and open the B ring, and finally yield monodictyphenone. The prenyltransferase GME11375 may catalyze the addition reaction between the C5 side chains and the carbon bone of dibenzodioxocinones. The remaining biochemical reactions to the final product dibenzodioxocinones should be methylation catalyzed by methyltransferase GME11366 and reduction and lactonization reaction catalyzed by a series of oxidordeuctases. The chain is Cytochrome P450 monooxygenase GME11363 from Pestalotiopsis microspora.